Consider the following 165-residue polypeptide: 3-hydroxyacyl-[acyl-carrier-protein] dehydratase FabZ (165 aa).

Histidine 64 is a catalytic residue.

It belongs to the thioester dehydratase family. FabZ subfamily.

It is found in the cytoplasm. It catalyses the reaction a (3R)-hydroxyacyl-[ACP] = a (2E)-enoyl-[ACP] + H2O. Involved in unsaturated fatty acids biosynthesis. Catalyzes the dehydration of short chain beta-hydroxyacyl-ACPs and long chain saturated and unsaturated beta-hydroxyacyl-ACPs. This Acidiphilium cryptum (strain JF-5) protein is 3-hydroxyacyl-[acyl-carrier-protein] dehydratase FabZ.